We begin with the raw amino-acid sequence, 177 residues long: SKP1-like protein 15 (177 aa).

Positions 108–167 (ILAANYLNVEGLLGLTCQTVADYIKDKTPEEVRELFNIENDFTHEEEEEAIRKENAWAFE) are interaction with the F-box domain of F-box proteins.

It belongs to the SKP1 family. As to quaternary structure, part of a SCF (SKP1-cullin-F-box) protein ligase complex. Expressed at low levels in seedlings and leaves.

The protein resides in the nucleus. Its pathway is protein modification; protein ubiquitination. In terms of biological role, involved in ubiquitination and subsequent proteasomal degradation of target proteins. Together with CUL1, RBX1 and a F-box protein, it forms a SCF E3 ubiquitin ligase complex. The functional specificity of this complex depends on the type of F-box protein. In the SCF complex, it serves as an adapter that links the F-box protein to CUL1. This is SKP1-like protein 15 (ASK15) from Arabidopsis thaliana (Mouse-ear cress).